The chain runs to 169 residues: Cell division inhibitor SulA (169 aa).

Residues 106 to 112 are ftsZ binding; it reads ALRTGNY. Residues 162–169 form a lon protease binding region; sequence KIHSNLYH.

Belongs to the SulA family. Interacts with FtsZ. Post-translationally, is rapidly cleaved and degraded by the Lon protease once DNA damage is repaired.

Functionally, component of the SOS system and an inhibitor of cell division. Accumulation of SulA causes rapid cessation of cell division and the appearance of long, non-septate filaments. In the presence of GTP, binds a polymerization-competent form of FtsZ in a 1:1 ratio, thus inhibiting FtsZ polymerization and therefore preventing it from participating in the assembly of the Z ring. This mechanism prevents the premature segregation of damaged DNA to daughter cells during cell division. The polypeptide is Cell division inhibitor SulA (Escherichia coli O45:K1 (strain S88 / ExPEC)).